The following is a 192-amino-acid chain: uncharacterized protein (192 aa).

The Nudix hydrolase domain occupies 29 to 160; sequence HRQAAVLIPI…PLDIYRRGDS (132 aa). Positions 67-89 match the Nudix box motif; that stretch reads GAVDDTDTSVIAAALREAEEEVA. The Mg(2+) site is built by glutamate 83 and glutamate 87.

This sequence belongs to the Nudix hydrolase family. PCD1 subfamily. It depends on Mn(2+) as a cofactor. Mg(2+) serves as cofactor.

Functionally, probably mediates the hydrolysis of some nucleoside diphosphate derivatives. This is an uncharacterized protein from Escherichia coli O7:K1 (strain IAI39 / ExPEC).